We begin with the raw amino-acid sequence, 489 residues long: Serine/threonine-protein kinase dyf-5 (489 aa).

The Protein kinase domain maps to 11–291 (YLMTKRLGDG…ANQSLRYKYF (281 aa)). Residues 17–25 (LGDGTFGEV) and Lys-40 contribute to the ATP site. The active-site Proton acceptor is Asp-132. Disordered regions lie at residues 366–385 (EKSDNKPLGPTKSNEAKPTA) and 452–489 (QTGPTVSNQTNNHSANNSHSPNKMSNTGRVDWAAKYVK). Low complexity predominate over residues 458–473 (SNQTNNHSANNSHSPN).

This sequence belongs to the protein kinase superfamily. CMGC Ser/Thr protein kinase family. RCK subfamily. Mg(2+) serves as cofactor. Expressed in head neurons including amphid and labial sensory neurons and 3 pairs of neurons in the tail including phasmid sensory neurons. In male, expressed in the tail including the sensory rays and the spicule.

Its subcellular location is the perikaryon. The protein localises to the cell projection. It localises to the dendrite. It is found in the axon. The protein resides in the cilium. It catalyses the reaction L-seryl-[protein] + ATP = O-phospho-L-seryl-[protein] + ADP + H(+). The enzyme catalyses L-threonyl-[protein] + ATP = O-phospho-L-threonyl-[protein] + ADP + H(+). Serine/threonine-protein kinase which is required for ciliogenesis. Regulates the length and the morphology of sensory neuron cilia. In addition, plays a role in the anterograde intraflagellar transport (IFT) in the cilia by regulating the undocking of kinesin-II motor complex (composed of klp-11, klp-20 and kap-1) before reaching the distal segment and the docking of kinesin motor osm-3 onto IFT cargos. The chain is Serine/threonine-protein kinase dyf-5 from Caenorhabditis elegans.